The primary structure comprises 1897 residues: MSGYPAGHYEDGYGHQEHGGDAYYQDEHGQAYYDPNDYGDSYYDRGNYYNAEGGQAYGQEGGYYDAGHQDDYYGDQYYDQGNGAPRGRRRGDSEEDSETFSDFTMRSETARAADMDYYGRGDERYNSYADSQYAGRGYNGYRPPSSQVSYGANRSSGASTPVYGMDYGSALPGGPRSREPYPAWASDGQVPVSKEEIEDIFIDLVNKFGFQRDSMRNMYDHLMTQLDSRASRMTPNQALLSLHADYIGGDNANYRRWYFAAHLDLDDAVGFANMKLGKADRKTRKARKAAKAAAQQNPENVEENLEAMEGDNSLEAAVYRWKSRMNRMSPHDRVRQLALYMLCWGEANQVRYMPECICFIFKCADDYYSSPECQSRVEPVEEFTYLNEIITPLYQFCRDQGYEILDGKYVRRERDHEKIIGYDDMNQLFWYPEGIERISFEDKTRLVDVPPAERWTKLKDVDWKKAFFKTYRETRSWFHMITNFNRIWVIHLGAFWFFTAYNAPTLYTKNYQQQLDNKPAGSKYWSAVGFGGALVGLIQILATLCEWMYVPRRWAGAQHLSKRLMFLIAVFIVNLAPGVVVFGFNNVLSETICLIIGIVHFFIALATFFFFSVMPLGGLFGSYLKKHGRQYVASQTFTASYPRLNGNDMWMSYGLWICVFGAKLVESYFFLTLSLKDPMRILSPMRIHQCAGVTYIPNSLCHAQPQILLGLMMFMDLTLFFLDSYLWYVICNTIFSVARSFYLGVSIWSPWRNIFSRLPKRIYSKVLATTDMEIKYKPKVLISQVWNAIIISMYREHLLAIDHVQKLLYHQVPSEQEGKRTLRAPTFFVSQEDQSFKTEFFPAGSEAERRISFFAQSVATPMPEPLPVDNMPTFTVLIPHYGEKILLSLREIIREDEPYSRVTLLEYLKQLHPHEWDCFVKDTKILADETSQLNGEPEKNEKDAQKSKIDDLPFYCIGFKSAAPEYTLRTRIWSSLRSQTLYRTISGFMNYSRAIKLLYRVENPEVVQMFGGNSEKLERELERMARRKFKICVSMQRYAKFNKEERENTEFLLRAYPDLQIAYLDEEPPANEGEEPRLYSALIDGHCELLDNGMRKPKFRIQLSGNPILGDGKSDNQNHSIIFYRGEYIQVIDANQDNYLEECLKIRSVLAEFEELTTDNVSPYTPGIATEAETPVAILGAREYIFSENVGVLGDVAASKEQTFGTLFARTLAQIGGKLHYGHPDFLNGIFMTTRGGISKAQKGLHLNEDIYAGMTALCRGGRIKHCEYFQCGKGRDLGFGSILNFTTKIGTGMGEQMLSREYYYLGTQLPLDRFLSFYYAHPGFHLNNMFIMLSVQMFMIVLINLGALKHETITCRYNSNLPITDPLRPTYCADLTPIIAWVNRCVVSIFIVFFISFVPLAVQELTERGLWRMATRLAKHFGSFSFMFEVFVCQIYANAVHQNLSFGGARYIGTGRGFATARIPFGVLYSRFAGPSIYAGSRLLLMLLFATSTVWTPALIWFWVSLLALCISPFLFNPHQFAWHDFFIDYRDYIRWLSRGNSRSHASSWIAFCRLSRTRLTGYKRKLLGVPSEKGSGDVPRAKFTNIFFSEIIAPLVQVAVTLVPYLYINSRTGISNDNERASNAVVRIAIVAFGPIGVNAGVSGMFFGMACCMGPIFGMCCKKFGAVLAAIAHAIAVIILLVIFEVMFFLESWSWPRMVLGMISAAAIQRFIYKLIISLALTREFKHDQSNIAWWTGKWYNMGWHSLSQPGREFLCKITELGYFSADFVLGHILLFVMLPALCIPYVDKFHSVILFWLRPSRQIRPPIYSLKQSKLRKRRVVRFAILYFTMLVLFLILLIAPLVARDEGISVNLNIMSLMQPLDTDNNDTISSYTGNGLPVGYSAWTPSAASASA.

The segment at 1–106 is disordered; it reads MSGYPAGHYE…SETFSDFTMR (106 aa). Over residues 8-29 the composition is skewed to basic and acidic residues; sequence HYEDGYGHQEHGGDAYYQDEHG. Residues 74–83 show a composition bias toward low complexity; it reads GDQYYDQGNG. 17 helical membrane passes run 487-507, 525-545, 564-584, 591-611, 655-675, 707-727, 728-748, 1329-1349, 1386-1406, 1473-1493, 1497-1517, 1588-1608, 1630-1650, 1666-1686, 1701-1721, 1766-1786, and 1826-1846; these read IWVI…PTLY, WSAV…ATLC, LMFL…VFGF, TICL…FFFF, LWIC…TLSL, ILLG…SYLW, YVIC…VSIW, NMFI…LGAL, CVVS…VQEL, FAGP…FATS, TPAL…PFLF, IFFS…VPYL, IAIV…MFFG, FGAV…LVIF, VLGM…IISL, FSAD…ALCI, and FAIL…APLV.

The protein belongs to the glycosyltransferase 48 family. Component of the 1,3-beta-glucan synthase (GS) complex composed of a catalytic subunit fksA and a regulatory subunit.

It is found in the mitochondrion. The protein localises to the cell membrane. It catalyses the reaction [(1-&gt;3)-beta-D-glucosyl](n) + UDP-alpha-D-glucose = [(1-&gt;3)-beta-D-glucosyl](n+1) + UDP + H(+). In terms of biological role, catalytic subunit of the 1,3-beta-glucan synthase. Synthesizes 1,3-beta-glucan, a major structural component of the fungal cell wall. Involved in cell wall synthesis, maintenance and remodeling. This chain is 1,3-beta-glucan synthase component FKS1, found in Aspergillus niger (strain ATCC MYA-4892 / CBS 513.88 / FGSC A1513).